Consider the following 418-residue polypeptide: ORC1-type DNA replication protein 2 (418 aa).

Residues 72–76 (TGKTV), tyrosine 218, and arginine 230 each bind ATP.

Belongs to the CDC6/cdc18 family.

In terms of biological role, involved in regulation of DNA replication. This chain is ORC1-type DNA replication protein 2 (cdc6-2), found in Sulfurisphaera tokodaii (strain DSM 16993 / JCM 10545 / NBRC 100140 / 7) (Sulfolobus tokodaii).